The chain runs to 388 residues: Lipid-A-disaccharide synthase (388 aa).

This sequence belongs to the LpxB family.

The enzyme catalyses a lipid X + a UDP-2-N,3-O-bis[(3R)-3-hydroxyacyl]-alpha-D-glucosamine = a lipid A disaccharide + UDP + H(+). It participates in bacterial outer membrane biogenesis; LPS lipid A biosynthesis. Functionally, condensation of UDP-2,3-diacylglucosamine and 2,3-diacylglucosamine-1-phosphate to form lipid A disaccharide, a precursor of lipid A, a phosphorylated glycolipid that anchors the lipopolysaccharide to the outer membrane of the cell. The polypeptide is Lipid-A-disaccharide synthase (Burkholderia pseudomallei (strain 1710b)).